A 150-amino-acid polypeptide reads, in one-letter code: Large ribosomal subunit protein uL15 (150 aa).

The segment covering Met-1 to Asn-15 has biased composition (polar residues). Residues Met-1–Gly-53 are disordered. Residues Gly-23–Ala-32 show a composition bias toward gly residues.

The protein belongs to the universal ribosomal protein uL15 family. In terms of assembly, part of the 50S ribosomal subunit.

Its function is as follows. Binds to the 23S rRNA. This Flavobacterium johnsoniae (strain ATCC 17061 / DSM 2064 / JCM 8514 / BCRC 14874 / CCUG 350202 / NBRC 14942 / NCIMB 11054 / UW101) (Cytophaga johnsonae) protein is Large ribosomal subunit protein uL15.